The following is a 279-amino-acid chain: NAD kinase (279 aa).

The Proton acceptor role is filled by Asp-57. Residues 57–58, 133–134, Arg-159, Asp-161, and 172–177 contribute to the NAD(+) site; these read DG, NE, and TAYNKS.

This sequence belongs to the NAD kinase family. It depends on a divalent metal cation as a cofactor.

The protein localises to the cytoplasm. It catalyses the reaction NAD(+) + ATP = ADP + NADP(+) + H(+). Functionally, involved in the regulation of the intracellular balance of NAD and NADP, and is a key enzyme in the biosynthesis of NADP. Catalyzes specifically the phosphorylation on 2'-hydroxyl of the adenosine moiety of NAD to yield NADP. The chain is NAD kinase from Streptococcus pyogenes serotype M12 (strain MGAS2096).